A 351-amino-acid polypeptide reads, in one-letter code: Nicotinate-nucleotide--dimethylbenzimidazole phosphoribosyltransferase (351 aa).

Residue glutamate 317 is the Proton acceptor of the active site.

It belongs to the CobT family.

It catalyses the reaction 5,6-dimethylbenzimidazole + nicotinate beta-D-ribonucleotide = alpha-ribazole 5'-phosphate + nicotinate + H(+). It participates in nucleoside biosynthesis; alpha-ribazole biosynthesis; alpha-ribazole from 5,6-dimethylbenzimidazole: step 1/2. Its function is as follows. Catalyzes the synthesis of alpha-ribazole-5'-phosphate from nicotinate mononucleotide (NAMN) and 5,6-dimethylbenzimidazole (DMB). This Pseudomonas aeruginosa (strain LESB58) protein is Nicotinate-nucleotide--dimethylbenzimidazole phosphoribosyltransferase.